We begin with the raw amino-acid sequence, 504 residues long: Transcriptional coactivator YAP1 (504 aa).

Pro residues-rich tracts occupy residues M1–A12 and P20–P36. The interval M1–G59 is disordered. Residues A37–G51 show a composition bias toward low complexity. The residue at position 61 (S61) is a Phosphoserine; by LATS1 and LATS2. T63 bears the Phosphothreonine mark. Positions M86–E100 form a coiled coil. K90 is subject to N6-lactoyllysine. The segment at L91–T114 is disordered. Residue S105 is modified to Phosphoserine. S109 carries the post-translational modification Phosphoserine; by LATS1 and LATS2. T110 is subject to Phosphothreonine. A Phosphothreonine; by MAPK8 and MAPK9 modification is found at T119. S127 bears the Phosphoserine; by LATS1 and LATS2 mark. A phosphoserine mark is found at S128 and S131. The disordered stretch occupies residues Q133–Q158. S138 is subject to Phosphoserine; by MAPK8 and MAPK9. T154 is subject to Phosphothreonine; by MAPK8 and MAPK9. S164 bears the Phosphoserine; by LATS1 and LATS2 mark. 2 consecutive WW domains span residues V171–K204 and G230–L263. 2 positions are modified to phosphoserine: S274 and S289. Disordered stretches follow at residues Q275 to Q309 and L355 to Y407. Residues Q291–L504 form a transactivation domain region. The stretch at S298 to G359 forms a coiled coil. A compositionally biased stretch (polar residues) spans L355–Y391. S367 carries the phosphoserine; by MAPK8 and MAPK9 modification. 4 positions are modified to phosphoserine: S371, S381, S382, and S388. S397 is subject to Phosphoserine; by LATS1 and LATS2. Residues S400 and S403 each carry the phosphoserine; by CK1 modification. The residue at position 407 (Y407) is a Phosphotyrosine; by ABL1. Phosphothreonine; by MAPK8 and MAPK9 is present on T412.

Belongs to the YAP1 family. As to quaternary structure, part of a complex when phosphorylated that contains DSG3, PKP1, YAP1 and YWHAG; the complex is required for localization of DSG3 and YAP1 to the cell membrane in keratinocytes. Binds to the SH3 domain of the YES kinase. Binds to WBP1 and WBP2. Binds, in vitro, through the WW1 domain, to neural isoforms of ENAH that contain the PPSY motif. The phosphorylated form interacts with YWHAB. Interacts (via WW domains) with LATS1 (via PPxY motif 2). Interacts with LATS2. Interacts with TEAD1, TEAD2, TEAD3 and TEAD4. Interacts with TP73. Interacts with RUNX1. Interacts with HCK. Interacts (via WW domains) with PTPN14 (via PPxY motif 2); this interaction leads to the cytoplasmic sequestration of YAP1 and inhibits its transcriptional coactivator activity. Interacts (when phosphorylated at Ser-127) with SMAD2, SMAD3 and WWTR1. Interacts with PRRG2 (via cytoplasmic domain). Interacts (via WW domains) with PRRG4 (via cytoplasmic domain). Interacts (phosphorylated) with CLDN18; the interaction sequesters YAP1 away from the nucleus and thereby restricts transcription of YAP1 target genes. Interacts with SMAD1. Interacts with AMOTL2, the interaction is required for ubiquitination of AMOTL2 and localization of YAP1 to tight junctions. Interacts with AMOT isoform 1; the interaction facilitates translocation of YAP1 to the cytoplasm and tight junctions. In terms of assembly, interacts (via WW domain 1) with isoform 3 of ERBB4 (via PPxY motif 2). Post-translationally, phosphorylated by LATS1 and LATS2; leading to cytoplasmic translocation and inactivation. Phosphorylated by ABL1; leading to YAP1 stabilization, enhanced interaction with TP73 and recruitment onto proapoptotic genes; in response to DNA damage. Phosphorylation at Ser-400 and Ser-403 by CK1 is triggered by previous phosphorylation at Ser-397 by LATS proteins and leads to YAP1 ubiquitination by SCF(beta-TRCP) E3 ubiquitin ligase and subsequent degradation. Phosphorylated at Thr-119, Ser-138, Thr-154, Ser-367 and Thr-412 by MAPK8/JNK1 and MAPK9/JNK2, which is required for the regulation of apoptosis by YAP1. Phosphorylated in the nucleus by PRP4K; phosphorylation leads to nuclear exclusion. Lactylation by AARS1 promotes nuclear localization and stabilization of YAP1, leading to increased Hippo signaling pathway. Delactylated by SIRT1. In terms of processing, ubiquitinated by SCF(beta-TRCP) E3 ubiquitin ligase. As to expression, increased expression seen in some liver and prostate cancers. Isoforms lacking the transactivation domain found in striatal neurons of patients with Huntington disease (at protein level).

It localises to the cytoplasm. The protein localises to the nucleus. The protein resides in the cell junction. Its subcellular location is the tight junction. It is found in the cell membrane. In terms of biological role, transcriptional regulator with dual roles as a coactivator and corepressor. Critical downstream regulatory target in the Hippo signaling pathway, crucial for organ size control and tumor suppression by restricting proliferation and promoting apoptosis. The Hippo signaling pathway core involves a kinase cascade featuring STK3/MST2 and STK4/MST1, along with its regulatory partner SAV1, which phosphorylates and activates LATS1/2 in complex with their regulatory protein, MOB1. This activation leads to the phosphorylation and inactivation of the YAP1 oncoprotein and WWTR1/TAZ. Phosphorylation of YAP1 by LATS1/2 prevents its nuclear translocation, thereby regulating the expression of its target genes. The transcriptional regulation of gene expression requires TEAD transcription factors and modulates cell growth, anchorage-independent growth, and induction of epithelial-mesenchymal transition (EMT). Plays a key role in tissue tension and 3D tissue shape by regulating the cortical actomyosin network, acting via ARHGAP18, a Rho GTPase activating protein that suppresses F-actin polymerization. It also suppresses ciliogenesis by acting as a transcriptional corepressor of TEAD4 target genes AURKA and PLK1. In conjunction with WWTR1, regulates TGFB1-dependent SMAD2 and SMAD3 nuclear accumulation. Synergizes with WBP2 to enhance PGR activity. Activates the C-terminal fragment (CTF) of ERBB4 (isoform 3). This chain is Transcriptional coactivator YAP1, found in Homo sapiens (Human).